A 262-amino-acid chain; its full sequence is MKNKVLKLKNNKIFDKKLATFLKNLDIFPNNWEFFEKAFIHASYINEHEDVSESYDRLEFLGDALIDFVVAKKLFELYPKYNEGLLTRTKIEIVKGENLNRIGMELKLGDFVKLSNGAELTENTVGDVLEALVGAIYEDMGMKKATEFVEKYIFERTFSEILKYDFFSLFQEQKLPEPRVRVSLTSNNLVLSIIELDGDIIWSQAIPNNKNYDDKSVLEHNAMASFTSFLKSSKGSHFFSDLKEKIENQKMCKKLAIKPKKN.

Positions 18-141 (LATFLKNLDI…LVGAIYEDMG (124 aa)) constitute an RNase III domain. A Mg(2+)-binding site is contributed by Glu-59. Asp-63 is an active-site residue. Residues Asp-127 and Glu-130 each contribute to the Mg(2+) site. The active site involves Glu-130.

It belongs to the ribonuclease III family. As to quaternary structure, homodimer. Requires Mg(2+) as cofactor.

It is found in the cytoplasm. It catalyses the reaction Endonucleolytic cleavage to 5'-phosphomonoester.. In terms of biological role, digests double-stranded RNA. Involved in the processing of primary rRNA transcript to yield the immediate precursors to the large and small rRNAs (23S and 16S). Processes some mRNAs, and tRNAs when they are encoded in the rRNA operon. Processes pre-crRNA and tracrRNA of type II CRISPR loci if present in the organism. This Mycoplasma genitalium (strain ATCC 33530 / DSM 19775 / NCTC 10195 / G37) (Mycoplasmoides genitalium) protein is Ribonuclease 3.